A 365-amino-acid chain; its full sequence is MNAKEFLIELLKFKSVTPNDDGALNFIAMELSDFEAFFIEKEGIKNLLLTKKFKDEGEHLAFGGHVDVVPAGEGWSSDAFVPMEKESFIYARGAQDMKSGVAAFVDALKNADFKGARLSLILTSDEEGEAIYGTKAVLEWMQKRDMLPDYAVVAEPTCVKKIGDSIKIGRRGSINGKLLIRGKQGHVAYPEKCINPVHDFAPVLKLLAGFDLDPGSAEFSPSKIVVTDIRGGIEVCNVTPNDLKLMFNVRNSPDTSLEDVKSYVEKICHGLNYELELKQSSEAFLTNIDNKIVQKMNESVQKITHEVPELNTKGGTSDARYFAKYGVKVVEFGVCNDRIHAIDERVSIEEFEKLCLVFKDLIENF.

H65 is a Zn(2+) binding site. D67 is an active-site residue. D96 provides a ligand contact to Zn(2+). The active-site Proton acceptor is E126. Positions 127, 155, and 340 each coordinate Zn(2+).

This sequence belongs to the peptidase M20A family. DapE subfamily. In terms of assembly, homodimer. Zn(2+) serves as cofactor. Co(2+) is required as a cofactor.

It carries out the reaction N-succinyl-(2S,6S)-2,6-diaminopimelate + H2O = (2S,6S)-2,6-diaminopimelate + succinate. It functions in the pathway amino-acid biosynthesis; L-lysine biosynthesis via DAP pathway; LL-2,6-diaminopimelate from (S)-tetrahydrodipicolinate (succinylase route): step 3/3. Catalyzes the hydrolysis of N-succinyl-L,L-diaminopimelic acid (SDAP), forming succinate and LL-2,6-diaminopimelate (DAP), an intermediate involved in the bacterial biosynthesis of lysine and meso-diaminopimelic acid, an essential component of bacterial cell walls. The chain is Succinyl-diaminopimelate desuccinylase from Campylobacter jejuni subsp. doylei (strain ATCC BAA-1458 / RM4099 / 269.97).